Here is a 11197-residue protein sequence, read N- to C-terminus: Nonribosomal peptide synthetase 5 (11197 aa).

Positions 19-413 (AQRARKQPDA…DGTLQVVGHK (395 aa)) are adenylation (A) domain 1. Residues 426–452 (HASSSASSVGETPGVTGPISTPMGDSV) form a disordered region. The condensation (C) domain 1 stretch occupies residues 690–897 (KQLRQFCQEQ…LMDESMKQQI (208 aa)). Residues 918 to 1310 (DAAQDYPDAP…GRHDGQLKVR (393 aa)) form an adenylation (A) domain 2 region. A Carrier 1 domain is found at 1446–1522 (ADRSPVHMML…DMANNIAISE (77 aa)). S1483 carries the O-(pantetheine 4'-phosphoryl)serine modification. Positions 1952–2380 (VEDVYPCSPV…SDISLMDPLS (429 aa)) are condensation (C) domain 2. The adenylation (A) domain 3 stretch occupies residues 2406–2805 (VARIEPDKMA…QRKDTQIKIR (400 aa)). Residues 2945–3021 (DSLTSTEVTI…SLAAFVDYDS (77 aa)) enclose the Carrier 2 domain. Position 2982 is an O-(pantetheine 4'-phosphoryl)serine (S2982). Residues 3041–3481 (EESFALSPIQ…TSTMKSEFTL (441 aa)) form an epimerase (E) domain 1 region. The condensation (C) domain 3 stretch occupies residues 3515–3957 (EEIFPCSPMQ…VSPETRCELD (443 aa)). An adenylation (A) domain 4 region spans residues 3976-4371 (FEQQVEKIPD…RRRDNQVKVR (396 aa)). In terms of domain architecture, Carrier 3 spans 4508 to 4584 (RKLTPMEQQL…ELANHARFKA (77 aa)). Residue S4545 is modified to O-(pantetheine 4'-phosphoryl)serine. An epimerase (E) domain 2 region spans residues 4603–5022 (FPLLPIQRMF…LNEYTAALRS (420 aa)). The condensation (C) domain 4 stretch occupies residues 5069 to 5501 (ESIYPCSPLQ…LVGDSERQGL (433 aa)). Residues 5521–5918 (EAQVKAIPDN…RRKDTQVKVR (398 aa)) are adenylation (A) domain 5. The Carrier 4 domain occupies 6068 to 6141 (SEAEDIIRAV…ALAQFVSQST (74 aa)). Position 6102 is an O-(pantetheine 4'-phosphoryl)serine (S6102). Residues 6162–6512 (FSLSPIQQMF…MEILFNYFGQ (351 aa)) are epimerase (E) domain 3. The interval 6636-7076 (EEIFPCSPIQ…LVGAETRREM (441 aa)) is condensation (C) domain 5. An adenylation (A) domain 6 region spans residues 7097–7491 (ERNSQAMPDR…RRRDNQVKVR (395 aa)). One can recognise a Carrier 5 domain in the interval 7636-7712 (KPKTKMEEHF…DLAGRSRFKN (77 aa)). Position 7673 is an O-(pantetheine 4'-phosphoryl)serine (S7673). An epimerase (E) domain 4 region spans residues 7733-8162 (ALLPIQRLFF…KYMLETLASQ (430 aa)). The segment at 8205 to 8638 (EASYPCSPLQ…MLGDSGRKRI (434 aa)) is condensation (C) domain 6. Residues 8660 to 8832 (EAHVKESPNR…DHRATATEIV (173 aa)) form an adenylation (A) domain 7 region. The Carrier 6 domain occupies 9173–9248 (SAQTAVVQII…AMAAKAQQIG (76 aa)). Position 9209 is an O-(pantetheine 4'-phosphoryl)serine (S9209). The segment at 9565–9683 (RVKDMRRAIP…LHEVVSALQK (119 aa)) is epimerase (E) domain 5. A condensation (C) domain 7 region spans residues 9721–10116 (VEDVYPTSPM…LVPAKHMEQL (396 aa)). The tract at residues 10136-10529 (DDMVRSTPTA…VGRKDTQIKI (394 aa)) is adenylation (A) domain 8. Residues 10663–10749 (LDSSDYVAMQ…TLAVTIKADM (87 aa)) form the Carrier 7 domain. S10708 is modified (O-(pantetheine 4'-phosphoryl)serine). A thioesterase (TE) domain region spans residues 10806–11104 (NFLVTGSTGF…SLRPMSGPEW (299 aa)).

Belongs to the NRP synthetase family.

It participates in secondary metabolite biosynthesis. Functionally, nonribosomal peptide synthetase; part of the Fg3_54/C64 gene cluster that mediates the biosynthesis of the octapeptide fusaoctaxin A, a virulence factor that is required for cell-to-cell invasiveness of plant host. The 2 nonribosomal peptide synthetases NRPS9 and NRPS5 form an assembly line which likely utilizes GABA as a starter unit (loaded on the unique module M1 of NRPS9) and sequentially incorporates seven extender units composed of the residues L-Ala, L-allo-Ile, L-Ser, L-Val, L-Ser, L-Leu and L-Leu, respectively. During the process, each of the residues that are tethered on modules M3-M7 of NRPS5 containing an E domain can undergo an epimerization reaction to produce a D-configuration before the transpeptidation reaction occurs. The elongation of the peptidyl chain might be terminated by module M8-mediated L-Leu incorporation, followed by R domain-catalyzed 4 electron reduction to release the resulting octapeptide from the assembly line as an alcohol. Fusaoctaxin A is cleaved by the cluster specific ABC transporter FGM5 to the pentapeptide fusapentaxin A and the tripeptide fusatrixin A. The other enzymes from the cluster, FGM1, FGM2, FGM3 and FGM9 seem not to be involved in the biosynthesis of fusaoctaxin A and their functions have still to be determined. The chain is Nonribosomal peptide synthetase 5 from Gibberella zeae (strain ATCC MYA-4620 / CBS 123657 / FGSC 9075 / NRRL 31084 / PH-1) (Wheat head blight fungus).